Reading from the N-terminus, the 415-residue chain is Glutamyl-tRNA reductase (415 aa).

Substrate is bound by residues 49-52 (TCNR), S106, 111-113 (EPQ), and Q117. Catalysis depends on C50, which acts as the Nucleophile. 186–191 (GAGETI) is a binding site for NADP(+).

It belongs to the glutamyl-tRNA reductase family. In terms of assembly, homodimer.

It catalyses the reaction (S)-4-amino-5-oxopentanoate + tRNA(Glu) + NADP(+) = L-glutamyl-tRNA(Glu) + NADPH + H(+). It functions in the pathway porphyrin-containing compound metabolism; protoporphyrin-IX biosynthesis; 5-aminolevulinate from L-glutamyl-tRNA(Glu): step 1/2. Functionally, catalyzes the NADPH-dependent reduction of glutamyl-tRNA(Glu) to glutamate 1-semialdehyde (GSA). The chain is Glutamyl-tRNA reductase from Teredinibacter turnerae (strain ATCC 39867 / T7901).